A 295-amino-acid chain; its full sequence is NAD kinase (295 aa).

The active-site Proton acceptor is the Asp-72. Residues Asp-72 to Gly-73, Asn-146 to Asp-147, Arg-157, Lys-174, Asp-176, Thr-187 to Ser-192, and Gln-247 each bind NAD(+).

Belongs to the NAD kinase family. A divalent metal cation serves as cofactor.

It is found in the cytoplasm. It catalyses the reaction NAD(+) + ATP = ADP + NADP(+) + H(+). Functionally, involved in the regulation of the intracellular balance of NAD and NADP, and is a key enzyme in the biosynthesis of NADP. Catalyzes specifically the phosphorylation on 2'-hydroxyl of the adenosine moiety of NAD to yield NADP. This chain is NAD kinase, found in Ectopseudomonas mendocina (strain ymp) (Pseudomonas mendocina).